A 35-amino-acid polypeptide reads, in one-letter code: Tau/kappa-theraphotoxin-Pc1a (35 aa).

3 disulfides stabilise this stretch: Cys-3-Cys-17, Cys-10-Cys-22, and Cys-16-Cys-29. Phe-35 carries the post-translational modification Phenylalanine amide.

This sequence belongs to the neurotoxin 10 (Hwtx-1) family. 62 (Vatx) subfamily. As to expression, expressed by the venom gland.

The protein localises to the secreted. In terms of biological role, selectively activates mammalian TRPV1, the capsaicin receptor, a non-selective cation channel expressed by sensory neurons of the pain pathway. Is less potent than VaTx2 and VaTx3. Interacts with distinct regions of the channel than capsaicin, since it only acts on the extracellular face of the channel, and capsaicin binds to the cytosolic side. Also activates avian TRPV1, which is insensitive to capsaicin. Significantly inhibits potassium channels Kv2.1/KCNB1. This chain is Tau/kappa-theraphotoxin-Pc1a, found in Psalmopoeus cambridgei (Trinidad chevron tarantula).